Consider the following 91-residue polypeptide: UPF0213 protein NGO_1598 (91 aa).

In terms of domain architecture, GIY-YIG spans 4–83; the sequence is SNWSVYLILC…AAQKRQLWEQ (80 aa).

The protein belongs to the UPF0213 family.

The protein is UPF0213 protein NGO_1598 of Neisseria gonorrhoeae (strain ATCC 700825 / FA 1090).